The chain runs to 230 residues: MTTYLSQDRLRNKENDTMTYQHSKMYQSRTFLLFSALLLVAGQASAAVGSADAPAPYRVSSDCMVCHGMTGRDTLYPIVPRLAGQHKSYMEAQLKAYKDHSRADQNGEIYMWPVAQALDSAKITALADYFNAQKPPMQSSGIKHAGAKEGKAIFNQGVTNEQIPACMECHGSDGQGAGPFPRLAGQRYGYIIQQLTYFHNGTRVNTLMNQIAKNITVAQMKDVAAYLSSL.

A signal peptide spans 1-47 (MTTYLSQDRLRNKENDTMTYQHSKMYQSRTFLLFSALLLVAGQASAA). 6 residues coordinate heme c: Cys63, Cys66, His67, Cys166, Cys169, and His170.

Post-translationally, binds 2 heme c groups covalently per subunit.

It is found in the periplasm. Functionally, diheme, high potential cytochrome c. The sequence is that of Cytochrome c-552 (cyc1) from Acidithiobacillus ferridurans.